The chain runs to 367 residues: Alanine racemase (367 aa).

Residue Lys40 is the Proton acceptor; specific for D-alanine of the active site. Position 40 is an N6-(pyridoxal phosphate)lysine (Lys40). Residue Arg136 coordinates substrate. Tyr263 acts as the Proton acceptor; specific for L-alanine in catalysis. Residue Met310 coordinates substrate.

The protein belongs to the alanine racemase family. It depends on pyridoxal 5'-phosphate as a cofactor.

It catalyses the reaction L-alanine = D-alanine. The protein operates within amino-acid biosynthesis; D-alanine biosynthesis; D-alanine from L-alanine: step 1/1. Catalyzes the interconversion of L-alanine and D-alanine. May also act on other amino acids. In Streptococcus thermophilus (strain CNRZ 1066), this protein is Alanine racemase (alr).